Reading from the N-terminus, the 502-residue chain is ATP synthase subunit alpha (502 aa).

The disordered stretch occupies residues Val115–Asp138. Gly169–Thr176 lines the ATP pocket.

This sequence belongs to the ATPase alpha/beta chains family. F-type ATPases have 2 components, CF(1) - the catalytic core - and CF(0) - the membrane proton channel. CF(1) has five subunits: alpha(3), beta(3), gamma(1), delta(1), epsilon(1). CF(0) has three main subunits: a(1), b(2) and c(9-12). The alpha and beta chains form an alternating ring which encloses part of the gamma chain. CF(1) is attached to CF(0) by a central stalk formed by the gamma and epsilon chains, while a peripheral stalk is formed by the delta and b chains.

It localises to the cell membrane. It catalyses the reaction ATP + H2O + 4 H(+)(in) = ADP + phosphate + 5 H(+)(out). Functionally, produces ATP from ADP in the presence of a proton gradient across the membrane. The alpha chain is a regulatory subunit. The polypeptide is ATP synthase subunit alpha (Geobacillus sp. (strain WCH70)).